The following is a 249-amino-acid chain: 2,3-bisphosphoglycerate-dependent phosphoglycerate mutase (249 aa).

Residues 10-17 (RHGESEWN), 23-24 (TG), Arg-62, 89-92 (ERHY), Lys-100, 116-117 (RR), and 185-186 (GN) contribute to the substrate site. His-11 functions as the Tele-phosphohistidine intermediate in the catalytic mechanism. Catalysis depends on Glu-89, which acts as the Proton donor/acceptor.

This sequence belongs to the phosphoglycerate mutase family. BPG-dependent PGAM subfamily. In terms of assembly, homodimer.

It catalyses the reaction (2R)-2-phosphoglycerate = (2R)-3-phosphoglycerate. The protein operates within carbohydrate degradation; glycolysis; pyruvate from D-glyceraldehyde 3-phosphate: step 3/5. Its function is as follows. Catalyzes the interconversion of 2-phosphoglycerate and 3-phosphoglycerate. The chain is 2,3-bisphosphoglycerate-dependent phosphoglycerate mutase from Hamiltonella defensa subsp. Acyrthosiphon pisum (strain 5AT).